Reading from the N-terminus, the 467-residue chain is Glutamate--tRNA ligase (467 aa).

The 'HIGH' region signature appears at 12–22 (PSPTGYLHIGG). Residues 114–128 (EQEAKKEKPRYDGRW) show a composition bias toward basic and acidic residues. A disordered region spans residues 114–140 (EQEAKKEKPRYDGRWRPAPGKTLPTPP). The 'KMSKS' region motif lies at 244–248 (KLSKR). Lys-247 contacts ATP.

Belongs to the class-I aminoacyl-tRNA synthetase family. Glutamate--tRNA ligase type 1 subfamily. In terms of assembly, monomer.

It is found in the cytoplasm. The catalysed reaction is tRNA(Glu) + L-glutamate + ATP = L-glutamyl-tRNA(Glu) + AMP + diphosphate. Functionally, catalyzes the attachment of glutamate to tRNA(Glu) in a two-step reaction: glutamate is first activated by ATP to form Glu-AMP and then transferred to the acceptor end of tRNA(Glu). This Azoarcus sp. (strain BH72) protein is Glutamate--tRNA ligase.